We begin with the raw amino-acid sequence, 180 residues long: 3-deoxy-D-manno-octulosonate 8-phosphate phosphatase KdsC (180 aa).

The Mg(2+) site is built by aspartate 14 and aspartate 16. Substrate is bound by residues aspartate 16, 37 to 41, lysine 45, arginine 60, arginine 68, and lysine 84; that span reads HVRDG. Aspartate 107 contributes to the Mg(2+) binding site.

This sequence belongs to the KdsC family. As to quaternary structure, homotetramer. Mg(2+) is required as a cofactor.

It catalyses the reaction 3-deoxy-alpha-D-manno-2-octulosonate-8-phosphate + H2O = 3-deoxy-alpha-D-manno-oct-2-ulosonate + phosphate. Its function is as follows. Catalyzes the hydrolysis of 3-deoxy-D-manno-octulosonate 8-phosphate (KDO 8-P) to 3-deoxy-D-manno-octulosonate (KDO) and inorganic phosphate. The polypeptide is 3-deoxy-D-manno-octulosonate 8-phosphate phosphatase KdsC (Haemophilus influenzae (strain ATCC 51907 / DSM 11121 / KW20 / Rd)).